The chain runs to 423 residues: Nucleoporin NUP42 (423 aa).

A C3H1-type zinc finger spans residues 1 to 25 (MAICQFFLQGRCRFGDRCWNEHPGA). The stretch at 14–15 (FG) is one FG 1 repeat. The tract at residues 24-85 (GARGAGGGRQ…EKPYFSSFDS (62 aa)) is disordered. Positions 40–69 (SGNNRRGWNTTSQRYSNVIQPSSFSKSTPW) are enriched in polar residues. The segment at 94–170 (GFGLSENPFA…EYHNFLTSNN (77 aa)) is interaction with HIV-1 Vpr. An FG 2 repeat occupies 95 to 96 (FG). Residue Ser-106 is modified to Phosphoserine. FG repeat units lie at residues 218 to 219 (FG), 220 to 221 (FG), 265 to 266 (FG), 271 to 272 (FG), 288 to 289 (FG), 290 to 291 (FG), 311 to 312 (FG), 336 to 337 (FG), 345 to 346 (FG), and 364 to 365 (FG). Residues 365–423 (GNSSISTSLSASSSIIATDNVLFTPRDKLTVEELEQFQSKKFTLGKIPLKPPPLELLNV) form an interaction with GLE1 region.

In terms of assembly, probable component of the nuclear pore complex (NPC). Interacts with nuclear export protein NXF1. Interacts with GLE1. Able to form a heterotrimer with NUP155 and GLE1 in vitro. Interacts with XPO1. (Microbial infection) Interacts with the HIV-1 virus proteins Rev and Vpr. The interaction with HIV-1 Rev, a protein that mediates nuclear export of unspliced viral RNAs, suggests that its function may be bypassed by the HIV-1 virus. In terms of processing, O-glycosylated. Ubiquitously expressed.

It is found in the nucleus. The protein resides in the nuclear pore complex. It localises to the nucleus membrane. Functionally, required for the export of mRNAs containing poly(A) tails from the nucleus into the cytoplasm. Its function is as follows. (Microbial infection) In case of infection by HIV-1, it may participate in the docking of viral Vpr at the nuclear envelope. In Homo sapiens (Human), this protein is Nucleoporin NUP42.